The primary structure comprises 131 residues: D-ribose pyranase (131 aa).

Residue H20 is the Proton donor of the active site. Substrate contacts are provided by residues D28, H98, and 120 to 122 (YAN).

It belongs to the RbsD / FucU family. RbsD subfamily. In terms of assembly, homodecamer.

It is found in the cytoplasm. The catalysed reaction is beta-D-ribopyranose = beta-D-ribofuranose. It participates in carbohydrate metabolism; D-ribose degradation; D-ribose 5-phosphate from beta-D-ribopyranose: step 1/2. Catalyzes the interconversion of beta-pyran and beta-furan forms of D-ribose. In Clostridium tetani (strain Massachusetts / E88), this protein is D-ribose pyranase.